The primary structure comprises 519 residues: Cobyric acid synthase (519 aa).

The region spanning 256–438 (WLRVAVPRLP…WHGLFENDAF (183 aa)) is the GATase cobBQ-type domain. C337 (nucleophile) is an active-site residue. Residue H430 is part of the active site.

Belongs to the CobB/CobQ family. CobQ subfamily.

It functions in the pathway cofactor biosynthesis; adenosylcobalamin biosynthesis. Its function is as follows. Catalyzes amidations at positions B, D, E, and G on adenosylcobyrinic A,C-diamide. NH(2) groups are provided by glutamine, and one molecule of ATP is hydrogenolyzed for each amidation. This is Cobyric acid synthase from Saccharopolyspora erythraea (strain ATCC 11635 / DSM 40517 / JCM 4748 / NBRC 13426 / NCIMB 8594 / NRRL 2338).